The following is a 378-amino-acid chain: tRNA-specific 2-thiouridylase MnmA (378 aa).

ATP contacts are provided by residues 9 to 16 (GVSGGVDS) and methionine 35. The interval 94-96 (NPD) is interaction with target base in tRNA. Cysteine 99 functions as the Nucleophile in the catalytic mechanism. Cysteines 99 and 195 form a disulfide. Glycine 123 serves as a coordination point for ATP. Positions 145 to 147 (KDQ) are interaction with tRNA. The active-site Cysteine persulfide intermediate is cysteine 195. The tract at residues 307-308 (RY) is interaction with tRNA.

This sequence belongs to the MnmA/TRMU family.

Its subcellular location is the cytoplasm. The enzyme catalyses S-sulfanyl-L-cysteinyl-[protein] + uridine(34) in tRNA + AH2 + ATP = 2-thiouridine(34) in tRNA + L-cysteinyl-[protein] + A + AMP + diphosphate + H(+). In terms of biological role, catalyzes the 2-thiolation of uridine at the wobble position (U34) of tRNA, leading to the formation of s(2)U34. The protein is tRNA-specific 2-thiouridylase MnmA of Xanthomonas campestris pv. campestris (strain 8004).